The following is a 95-amino-acid chain: Small ribosomal subunit protein bS20 (95 aa).

This sequence belongs to the bacterial ribosomal protein bS20 family.

In terms of biological role, binds directly to 16S ribosomal RNA. This Ehrlichia chaffeensis (strain ATCC CRL-10679 / Arkansas) protein is Small ribosomal subunit protein bS20.